Reading from the N-terminus, the 1047-residue chain is Exportin-6 (1047 aa).

Residues 32 to 98 enclose the Importin N-terminal domain; sequence IDTILNNYKA…KGLLLDIYLN (67 aa).

This sequence belongs to the exportin family.

It is found in the nucleus. It localises to the cytoplasm. Probably mediates the nuclear export of actin and profilin-actin complexes. The chain is Exportin-6 (xpo6) from Dictyostelium discoideum (Social amoeba).